We begin with the raw amino-acid sequence, 81 residues long: UPF0181 protein Spro_2806 (81 aa).

The interval 43-81 is disordered; sequence EKHQGDQVSVMFDDEDDDEEYQERPDDQADDDSEEDENY. Composition is skewed to acidic residues over residues 54 to 63 and 70 to 81; these read FDDEDDDEEY and QADDDSEEDENY.

It belongs to the UPF0181 family.

In Serratia proteamaculans (strain 568), this protein is UPF0181 protein Spro_2806.